Here is a 515-residue protein sequence, read N- to C-terminus: MATTLNPSEISELIKTRIEQVKLSAESRNEGTVTSVSDGIVRIFGLADAMQGEMIELPNKTYALALNLERDSVGAVVLGDYEHLREGDVAKTTGRILEVPVGKSLLGRVVNALGEPIDGKGTLGPTQTAPVERVAPGVIWRKSVDQPVQTGYKSVDAMIPIGRGQRELIIGDRQTGKTAMAIDTVISQKHTGIKCVYVAIGQKSSTIANIVRKLEENDALDHTIVVAATASESAALQYISAYAGCTMGEYFMDRGEDALIIYDDLSKQAVAYRQISLLLKRPPGREAYPGDVFYLHSRLLERAARVSEEYVEKFTQGEVKGKTGSLTALPIIETQAGDVSAFVPTNVISITDGQIFLETDLFNAGIRPAVNAGISVSRVGGSAQTKIIKKLSGGIRISLAQYRELAAFAQFASDLDETTRKQLERGQRVTELMKQKQYTSMSVANQALSIYAVSEGYLDDIPVHKVLTFEEGLHAHFSNTQGALIDKINNSGDWDNNIEAAFKQHIEEFKTTGSW.

Gly-171–Thr-178 is a binding site for ATP.

The protein belongs to the ATPase alpha/beta chains family. F-type ATPases have 2 components, CF(1) - the catalytic core - and CF(0) - the membrane proton channel. CF(1) has five subunits: alpha(3), beta(3), gamma(1), delta(1), epsilon(1). CF(0) has three main subunits: a(1), b(2) and c(9-12). The alpha and beta chains form an alternating ring which encloses part of the gamma chain. CF(1) is attached to CF(0) by a central stalk formed by the gamma and epsilon chains, while a peripheral stalk is formed by the delta and b chains.

The protein localises to the cell inner membrane. The enzyme catalyses ATP + H2O + 4 H(+)(in) = ADP + phosphate + 5 H(+)(out). In terms of biological role, produces ATP from ADP in the presence of a proton gradient across the membrane. The alpha chain is a regulatory subunit. In Xylella fastidiosa (strain Temecula1 / ATCC 700964), this protein is ATP synthase subunit alpha.